A 232-amino-acid chain; its full sequence is Homeobox protein Rhox13 (232 aa).

The disordered stretch occupies residues 45–114 (QAAVASSHDS…EAAAPSVAAV (70 aa)). Residues 68-105 (SDSESESDSESESDSSDSSDESDDDSSTSDEDTSDPEE) show a composition bias toward acidic residues. A DNA-binding region (homeobox) is located at residues 148-207 (RRGPPFHFAQWQVEEMESLFEETQYPDLLTRGELARTLNVPEVKVKVWFTNRRAKQRKIE).

This sequence belongs to the paired-like homeobox family.

It localises to the nucleus. In terms of biological role, probable transcription factor. The protein is Homeobox protein Rhox13 of Mus musculus (Mouse).